We begin with the raw amino-acid sequence, 304 residues long: Sulfotransferase 1C3 (304 aa).

56–61 is a binding site for 3'-phosphoadenylyl sulfate; that stretch reads KSGTTW. Substrate is bound at residue 115-117; sequence KTH. The active-site Proton acceptor is the histidine 117. 3'-phosphoadenylyl sulfate is bound by residues arginine 139, serine 147, tyrosine 202, 236-241, and 264-268; these read TSFDVM and FMRKG.

The protein belongs to the sulfotransferase 1 family. In terms of tissue distribution, not detectable in any of the tissues tested. As to expression, expressed in the small intestine.

Its subcellular location is the cytoplasm. It catalyses the reaction an alcohol + 3'-phosphoadenylyl sulfate = an alkyl sulfate + adenosine 3',5'-bisphosphate + H(+). The enzyme catalyses a phenol + 3'-phosphoadenylyl sulfate = an aryl sulfate + adenosine 3',5'-bisphosphate + H(+). The catalysed reaction is lithocholate + 3'-phosphoadenylyl sulfate = lithocholate sulfate + adenosine 3',5'-bisphosphate + H(+). In terms of biological role, sulfotransferase that utilizes 3'-phospho-5'-adenylyl sulfate (PAPS) as sulfonate donor. Has sulfotransferase activity towards various substrates, such as bile acids, thyroid hormones and toward xenobiotic compounds such as chloro phenols and hydroxypyrenes. Lithocholic acid appears to be the best substrate among the endogenous compounds tested and 3,3',5,5'-tetrachloro-4,4'-biphenyldiol shows the highest specific activity among the xenobiotic compounds. Functionally, exhibits weak sulphating activity and only toward chloro phenols (pentachlorophenol and 3,3',5,5'-tetrachloro-4,4'-biphenyldiol). This chain is Sulfotransferase 1C3 (SULT1C3), found in Homo sapiens (Human).